The primary structure comprises 605 residues: Podocalyxin-like protein 2 (605 aa).

A signal peptide spans 1–32 (MGRLLRAARLPPLLSPLLLLLVGGAFLGACVA). Over 33–500 (GSDEPGPEGL…ASQVRSDYGT (468 aa)) the chain is Extracellular. O-linked (Xyl...) (chondroitin sulfate) serine glycosylation occurs at S79. Sulfotyrosine occurs at positions 97 and 118. The interval 129-134 (SIEDTS) is O-glycosylated at one site. A disordered region spans residues 129 to 347 (SIEDTSQAQE…PGDMELTPSS (219 aa)). S144 carries O-linked (GalNAc...) serine glycosylation. Over residues 162 to 189 (EEEEEEEEEEEREKEEVEKQEEEEEEEL) the composition is skewed to acidic residues. Residue N193 is glycosylated (N-linked (GlcNAc...) asparagine). Residues 207–217 (SLTSSSQTPGA) are compositionally biased toward polar residues. 2 stretches are compositionally biased toward low complexity: residues 241–255 (PSLL…TVTP) and 288–298 (EATAGAAGLSG). Residue N395 is glycosylated (N-linked (GlcNAc...) asparagine). The chain crosses the membrane as a helical span at residues 501–521 (LFVVLVVIGAICIIIIALGLL). At 522 to 605 (YNCWQRRLPK…SDVFEEDTHL (84 aa)) the chain is on the cytoplasmic side. The disordered stretch occupies residues 554-605 (LDVASDSQSEMQEKHPSLNGGGALNGPGSWGALMGGKRDPEDSDVFEEDTHL). At S570 the chain carries Phosphoserine. The span at 572 to 582 (NGGGALNGPGS) shows a compositional bias: gly residues. Positions 594-605 (EDSDVFEEDTHL) are enriched in acidic residues. The residue at position 596 (S596) is a Phosphoserine.

This sequence belongs to the podocalyxin family. In terms of assembly, homodimer; disulfide-linked. Interacts with SELL, SELE and SELP. O-glycosylated; contains chondroitin sulfate. Displays sialylated O-linked oligosaccharides. In terms of processing, sulfation is necessary for interaction with SELL. Sialylated O-linked oligosaccharides are necessary for interaction with SELL, SELE and SELP. As to expression, expressed in T-cells, B-cells and monocytes. Expression is higher on memory and germinal center cells than on naive B-cells (at protein level). Highly expressed in brain. Moderately expressed in pancreas, kidney and lymphoid node. Weakly expressed in liver. Detected in both endothelial cells and CD34+ bone marrow cells.

Its subcellular location is the membrane. Acts as a ligand for vascular selectins. Mediates rapid rolling of leukocytes over vascular surfaces through high affinity divalent cation-dependent interactions with E-, P- and L-selectins. This Homo sapiens (Human) protein is Podocalyxin-like protein 2 (PODXL2).